The chain runs to 420 residues: E3 ubiquitin protein ligase DRIP2 (420 aa).

The segment at 20–61 (CPLCDKLLRDATTISECLHTFCRKCIYEKITEDEIESCPVCD) adopts an RING-type zinc-finger fold. Over residues 113–123 (ISSLVVSTPRV) the composition is skewed to polar residues. Disordered stretches follow at residues 113–201 (ISSL…KDVD) and 226–289 (DPKS…TFGD). Residues 154 to 165 (KKEEEFGDDHVE) show a composition bias toward basic and acidic residues. 2 stretches are compositionally biased toward polar residues: residues 166–194 (SASS…SLSN) and 232–242 (GNASHNDVQGS). Basic residues predominate over residues 244–253 (TKTKDHKRKC). Over residues 260–273 (SNNGDPTTSETATL) the composition is skewed to polar residues. Residues 274–284 (KRTRRTRRKRS) are compositionally biased toward basic residues.

As to quaternary structure, interacts with DREB2A. In terms of processing, auto-ubiquitinated. In terms of tissue distribution, expressed in roots, leaves and flowers.

The enzyme catalyses S-ubiquitinyl-[E2 ubiquitin-conjugating enzyme]-L-cysteine + [acceptor protein]-L-lysine = [E2 ubiquitin-conjugating enzyme]-L-cysteine + N(6)-ubiquitinyl-[acceptor protein]-L-lysine.. It functions in the pathway protein modification; protein ubiquitination. Its function is as follows. E3 ubiquitin-protein ligase that acts as a negative regulator of the response to water stress. Mediates ubiquitination and subsequent proteasomal degradation of the drought-induced transcriptional activator DREB2A. Functionally redundant with DRIP1. The protein is E3 ubiquitin protein ligase DRIP2 (DRIP2) of Arabidopsis thaliana (Mouse-ear cress).